The chain runs to 161 residues: Thy-1 membrane glycoprotein (161 aa).

Positions 1–19 are cleaved as a signal peptide; it reads MNPVISITLLLSVLQMSRG. A Pyrrolidone carboxylic acid modification is found at Gln-20. The Ig-like V-type domain maps to 20-126; sequence QRVISLTACL…NKTINVIRDK (107 aa). 2 disulfides stabilise this stretch: Cys-28-Cys-130 and Cys-38-Cys-104. Residue Asn-42 is glycosylated (N-linked (GlcNAc...) (complex) asparagine; alternate). The N-linked (GlcNAc...) (high mannose) asparagine; alternate glycan is linked to Asn-42. Residue Asn-42 is glycosylated (N-linked (GlcNAc...) asparagine; alternate). Ser-82 carries the phosphoserine modification. An N-linked (GlcNAc...) (complex) asparagine; alternate glycan is attached at Asn-93. Residue Asn-93 is glycosylated (N-linked (GlcNAc...) asparagine; alternate). Asn-117 carries an N-linked (GlcNAc...) (high mannose) asparagine; in brain; alternate glycan. Asn-117 is a glycosylation site (N-linked (GlcNAc...) (hybrid) asparagine; in brain; alternate). Residue Cys-130 is the site of GPI-anchor amidated cysteine attachment. Residues 131 to 161 constitute a propeptide, removed in mature form; it reads GGISLLVQNTSWLLLLLLSLSFLQATDFISL.

Glycosylation is tissue specific. Sialylation of N-glycans at Asn-93 in brain and at Asn-42, Asn-93 and Asn-117 in thymus. Abundant in lymphoid tissues.

Its subcellular location is the cell membrane. Its function is as follows. May play a role in cell-cell or cell-ligand interactions during synaptogenesis and other events in the brain. In Rattus norvegicus (Rat), this protein is Thy-1 membrane glycoprotein (Thy1).